A 126-amino-acid polypeptide reads, in one-letter code: Large ribosomal subunit protein uL22 (126 aa).

It belongs to the universal ribosomal protein uL22 family. In terms of assembly, part of the 50S ribosomal subunit.

Its function is as follows. This protein binds specifically to 23S rRNA; its binding is stimulated by other ribosomal proteins, e.g. L4, L17, and L20. It is important during the early stages of 50S assembly. It makes multiple contacts with different domains of the 23S rRNA in the assembled 50S subunit and ribosome. In terms of biological role, the globular domain of the protein is located near the polypeptide exit tunnel on the outside of the subunit, while an extended beta-hairpin is found that lines the wall of the exit tunnel in the center of the 70S ribosome. The chain is Large ribosomal subunit protein uL22 from Bradyrhizobium sp. (strain BTAi1 / ATCC BAA-1182).